Consider the following 101-residue polypeptide: Olivetolic acid cyclase (101 aa).

Residues 3–97 (VKHLIVLKFK…FWEKLLIFDY (95 aa)) form the Stress-response A/B barrel domain. 3,5,7-trioxododecanoyl-CoA is bound at residue H5. V31, I34, and M37 together coordinate Mg(2+). Residue Y72 participates in 3,5,7-trioxododecanoyl-CoA binding. Active-site acid/base catalyst residues include Y72 and H75.

Homodimer. Expressed in glandular trichomes and at lower levels in female flowers.

Its subcellular location is the cytoplasm. It carries out the reaction 3,5,7-trioxododecanoyl-CoA = olivetolate + CoA + H(+). It functions in the pathway secondary metabolite biosynthesis; terpenoid biosynthesis. Its function is as follows. Involved in the biosynthesis of cannabinoids-related terpenophenolic natural products, which have pharmacological activity. Polyketide cyclase which functions in concert with OLS/TKS to form olivetolic acid. Has no intrinsic polyketide synthase activity and requires the presence of OLS to produce olivetolic acid. In Cannabis sativa (Hemp), this protein is Olivetolic acid cyclase.